The sequence spans 432 residues: Trigger factor (432 aa).

A PPIase FKBP-type domain is found at 161–246 (EDRVTIDFTG…LKKVEERGLP (86 aa)).

Belongs to the FKBP-type PPIase family. Tig subfamily.

The protein resides in the cytoplasm. It carries out the reaction [protein]-peptidylproline (omega=180) = [protein]-peptidylproline (omega=0). Its function is as follows. Involved in protein export. Acts as a chaperone by maintaining the newly synthesized protein in an open conformation. Functions as a peptidyl-prolyl cis-trans isomerase. The polypeptide is Trigger factor (Salmonella choleraesuis (strain SC-B67)).